We begin with the raw amino-acid sequence, 511 residues long: Putative thymidine phosphorylase (511 aa).

This sequence belongs to the thymidine/pyrimidine-nucleoside phosphorylase family. Type 2 subfamily.

It catalyses the reaction thymidine + phosphate = 2-deoxy-alpha-D-ribose 1-phosphate + thymine. The protein is Putative thymidine phosphorylase of Bradyrhizobium sp. (strain BTAi1 / ATCC BAA-1182).